The primary structure comprises 176 residues: Translation initiation factor IF-3 (176 aa).

This sequence belongs to the IF-3 family. As to quaternary structure, monomer.

It is found in the cytoplasm. Functionally, IF-3 binds to the 30S ribosomal subunit and shifts the equilibrium between 70S ribosomes and their 50S and 30S subunits in favor of the free subunits, thus enhancing the availability of 30S subunits on which protein synthesis initiation begins. The protein is Translation initiation factor IF-3 of Streptococcus pyogenes serotype M18 (strain MGAS8232).